We begin with the raw amino-acid sequence, 312 residues long: Urease accessory protein 7 (312 aa).

Residues 28 to 86 (QEATGTDSHHAHHHHTPSGASSAISHTHDNMPHDHGQFHDHGPGLWTPEEHGHTHEHLE) form a disordered region. The segment at 36-87 (HHAHHHHTPSGASSAISHTHDNMPHDHGQFHDHGPGLWTPEEHGHTHEHLEH) is histine rich nickel-binding domain. A compositionally biased stretch (basic and acidic residues) spans 53 to 86 (HTHDNMPHDHGQFHDHGPGLWTPEEHGHTHEHLE). The GTP binding P-loop motif lies at 115–122 (GPVGSGKT). The short motif at 147 to 154 (TREDQEFL) is the Switch domain 1 element. A switch domain 2 motif is present at residues 171 to 172 (GG).

Belongs to the SIMIBI class G3E GTPase family. UreG subfamily. URE4, URE6 and URE7 may form a complex that acts as a GTP-hydrolysis-dependent molecular chaperone, activating the urease apoprotein URE1.

Its function is as follows. Urease accessory protein that binds 2 nickel atoms likely via its conserved histidine-rich domain and supplies nickel for the functional urease URE1. Has probably a dual function as a nickel chaperone and GTPase. Plays a role in host brain invasion. The protein is Urease accessory protein 7 of Cryptococcus neoformans var. grubii serotype A (strain H99 / ATCC 208821 / CBS 10515 / FGSC 9487) (Filobasidiella neoformans var. grubii).